We begin with the raw amino-acid sequence, 602 residues long: FAD-binding monooxygenase hmp7 (602 aa).

Residues threonine 108 to tryptophan 111, aspartate 120 to valine 121, and tyrosine 126 contribute to the FAD site. Glutamine 118–aspartate 120 provides a ligand contact to NADP(+). NADP(+) is bound by residues threonine 252–glutamine 258 and arginine 275–threonine 276.

This sequence belongs to the FAD-binding monooxygenase family. FAD serves as cofactor.

It functions in the pathway secondary metabolite biosynthesis. Functionally, FAD-binding monooxygenase; part of the gene cluster that mediates the biosynthesis of hypothemycin, a resorcylic acid lactone (RAL) that irreversibly inhibits a subset of protein kinases with a conserved cysteine in the ATP binding site such as human ERK2. The first step is performed by both PKSs hmp3 and hmp8 and leads to the production of 7',8'-dehydrozearalenol (DHZ). The highly reducing PKS hpm8 synthesizes the reduced hexaketide (7S,11S,2E,8E)-7,11-dihydroxy-dodeca-2,8-dienoate, which is transferred downstream to the non-reducing PKS hpm3. Hpm3 then extends the reduced hexaketide to a nonaketide, after which regioselective cyclization and macrolactonization affords DHZ. The next step is the conversion of DHZ into aigialomycin C and is performed by the O-methyltransferase hmp5, the FAD-binding monooxygenase hmp7, and the cytochrome P450 monooxygenase hmp1. The wide substrate tolerance of the hmp5 and hmp7 implies that the reactions from DHZ to aigialomycin C can occur in any order. The steps from aigialomycin C to hypothemycin are less well established. The FAD-linked oxidoreductase hmp9 presumably catalyzes oxidation of the C-6' hydroxyl to a ketone. The timing of this oxidation is important, since the resulting enone functional group is a Michael acceptor that can react spontaneously with glutathione, an abundant metabolite in fungal cells. The glutathione S-transferase hmp2 catalyzes cis-trans isomerization of the 7',8' double bond with equilibrium favoring the trans isomer. The hpm6-encoded transporter might preferentially pump hypothemycin out of the cell relative to the trans isomer aigialomycin A. The cis-to-trans isomerization may be coupled with C-4' hydroxylation, since all known hypothemycin analogs containing the enone functional group also have hydroxyl groups at both C-4' and C-5'. The protein is FAD-binding monooxygenase hmp7 of Hypomyces subiculosus (Nectria subiculosa).